The primary structure comprises 143 residues: Large ribosomal subunit protein uL11 (143 aa).

It belongs to the universal ribosomal protein uL11 family. Part of the ribosomal stalk of the 50S ribosomal subunit. Interacts with L10 and the large rRNA to form the base of the stalk. L10 forms an elongated spine to which L12 dimers bind in a sequential fashion forming a multimeric L10(L12)X complex. One or more lysine residues are methylated.

Functionally, forms part of the ribosomal stalk which helps the ribosome interact with GTP-bound translation factors. In Cupriavidus metallidurans (strain ATCC 43123 / DSM 2839 / NBRC 102507 / CH34) (Ralstonia metallidurans), this protein is Large ribosomal subunit protein uL11.